The sequence spans 516 residues: Exodeoxyribonuclease 7 large subunit (516 aa).

This sequence belongs to the XseA family. In terms of assembly, heterooligomer composed of large and small subunits.

The protein resides in the cytoplasm. The enzyme catalyses Exonucleolytic cleavage in either 5'- to 3'- or 3'- to 5'-direction to yield nucleoside 5'-phosphates.. Functionally, bidirectionally degrades single-stranded DNA into large acid-insoluble oligonucleotides, which are then degraded further into small acid-soluble oligonucleotides. The chain is Exodeoxyribonuclease 7 large subunit from Chlamydia trachomatis serovar A (strain ATCC VR-571B / DSM 19440 / HAR-13).